Consider the following 477-residue polypeptide: Pyruvate kinase (477 aa).

Arginine 34 is a binding site for substrate. Positions 36, 64, and 65 each coordinate K(+). ATP is bound at residue 36 to 39 (NTAH). Residues arginine 71 and lysine 150 each coordinate ATP. A Mg(2+)-binding site is contributed by glutamate 216. Residues glycine 239, aspartate 240, and threonine 272 each coordinate substrate. A Mg(2+)-binding site is contributed by aspartate 240.

The protein belongs to the pyruvate kinase family. Homotetramer. Mg(2+) serves as cofactor. The cofactor is K(+).

The enzyme catalyses pyruvate + ATP = phosphoenolpyruvate + ADP + H(+). Its pathway is carbohydrate degradation; glycolysis; pyruvate from D-glyceraldehyde 3-phosphate: step 5/5. The chain is Pyruvate kinase (pyk) from Borreliella burgdorferi (strain ATCC 35210 / DSM 4680 / CIP 102532 / B31) (Borrelia burgdorferi).